A 1415-amino-acid chain; its full sequence is Non-structural polyprotein 1AB (1415 aa).

A coiled-coil region spans residues 104 to 142 (KLIHKANALQERLRLSQEEKATLALDVQFLQHENVRLKE). The next 5 helical transmembrane spans lie at 154 to 174 (MKWI…GGYA), 239 to 259 (VFYY…LAIG), 286 to 306 (VLPT…TLMV), 313 to 333 (LLAI…LCFM), and 344 to 364 (GLIA…LTGT). Active-site charge relay system; for serine protease activity residues include H461, D489, and S551. The stretch at 587–616 (VKAPSRVELLKEEIERLKAQLNSAAENPAT) forms a coiled coil. O-(5'-phospho-RNA)-tyrosine is present on Y693. The segment at 753-813 (FDQAKPTPAP…KNEPQPYSQT (61 aa)) is disordered. A compositionally biased stretch (basic and acidic residues) spans 783-795 (SQKKEKQLEHEQQ). A compositionally biased stretch (polar residues) spans 800 to 813 (TKPQKNEPQPYSQT). Positions 1160–1286 (KHFIEFDWTR…TTPSVPDDYE (127 aa)) constitute a RdRp catalytic domain.

It belongs to the astroviridae polyprotein 1AB family. In terms of assembly, monomer. Post-translationally, cleaved by the viral and host proteases. The protease is probably autocatalytically cleaved.

It localises to the host membrane. The catalysed reaction is RNA(n) + a ribonucleoside 5'-triphosphate = RNA(n+1) + diphosphate. Functionally, responsible for the cleavage of the polyprotein into functional products. Covalently attached to the 5' extremity of the genomic and subgenomic RNAs. It may serve as a primer for the replicase. In Human astrovirus-4 (HAstV-4), this protein is Non-structural polyprotein 1AB (ORF1).